The following is an 89-amino-acid chain: Small cysteine-rich protein 1 (89 aa).

Positions 1 to 20 (MDVRFRLCLFLVILVIVANA) are cleaved as a signal peptide. Residues 21-27 (NVIKEPE) constitute a propeptide that is removed on maturation.

It belongs to the Cnidaria small cysteine-rich protein (SCRiP) family. gamma subfamily. In terms of processing, contains 4 disulfide bonds.

It is found in the secreted. The protein localises to the nematocyst. Induces neurotoxic symptoms on zebrafish. Has also been claimed to be implied in calcification, but tests on homolog proteins suggest that proteins of this family have a neurotoxic function and not a calcification function. In Acropora millepora (Staghorn coral), this protein is Small cysteine-rich protein 1.